The chain runs to 144 residues: Bombinins BLP-7/GH-2 (144 aa).

Positions 1–18 (MNFKYIVAVSFLIASTYA) are cleaved as a signal peptide. The propeptide occupies 19–43 (RSVKNDEQSLSQRDVLEEESLREIR). Position 70 is an asparagine amide (N70). A propeptide spanning residues 74 to 123 (TAEEHEVMKRLEAVMRDLDSLDYPEEASEMETRSFNQEEIANLFTKKEKR) is cleaved from the precursor. I143 bears the Isoleucine amide mark.

It belongs to the bombinin family. As to expression, expressed by the skin glands.

The protein localises to the secreted. Antimicrobial peptide with activity against Gram-positive and -negative bacteria and fungi. Shows activity against P.acnes (MIC=5 uM), E.coli (MIC=5-6.3 uM), S.aureus (MIC=5-6.3 uM), M.luteus, S.cerevisiae and C.albicans (MIC=10-12.5 uM). Also reduces the production of interleukin (IL)-8 and granulocyte-macrophage colony stimulating factor (CSF2) in normal human epidermal keratinocytes (NHEKs). Shows anticancer activity against three human hepatoma cell lines. In vivo, using the rat ear edema model, suppress P.acnes-induced skin inflammation, significantly reducing the ear thickness. Shows weak hemolytic activity against human erythrocytes. Functionally, shows weak antimicrobial activity but high hemolytic activity. The sequence is that of Bombinins BLP-7/GH-2 from Bombina orientalis (Oriental fire-bellied toad).